A 416-amino-acid chain; its full sequence is Beta sliding clamp (416 aa).

It belongs to the beta sliding clamp family. As to quaternary structure, forms a ring-shaped head-to-tail homodimer around DNA which binds and tethers DNA polymerases and other proteins to the DNA. The DNA replisome complex has a single clamp-loading complex (3 tau and 1 each of delta, delta', psi and chi subunits) which binds 3 Pol III cores (1 core on the leading strand and 2 on the lagging strand) each with a beta sliding clamp dimer. Additional proteins in the replisome are other copies of gamma, psi and chi, Ssb, DNA helicase and RNA primase.

It is found in the cytoplasm. Confers DNA tethering and processivity to DNA polymerases and other proteins. Acts as a clamp, forming a ring around DNA (a reaction catalyzed by the clamp-loading complex) which diffuses in an ATP-independent manner freely and bidirectionally along dsDNA. Initially characterized for its ability to contact the catalytic subunit of DNA polymerase III (Pol III), a complex, multichain enzyme responsible for most of the replicative synthesis in bacteria; Pol III exhibits 3'-5' exonuclease proofreading activity. The beta chain is required for initiation of replication as well as for processivity of DNA replication. This Chlamydia trachomatis serovar D (strain ATCC VR-885 / DSM 19411 / UW-3/Cx) protein is Beta sliding clamp (dnaN).